The primary structure comprises 576 residues: Aspartate--tRNA ligase (576 aa).

Glutamate 170 contributes to the L-aspartate binding site. The tract at residues 194 to 197 is aspartate; sequence QLFK. Residue arginine 216 coordinates L-aspartate. ATP is bound by residues 216-218 and glutamine 225; that span reads RDE. L-aspartate is bound at residue histidine 438. Glutamate 471 lines the ATP pocket. Arginine 478 is a binding site for L-aspartate. 523 to 526 serves as a coordination point for ATP; the sequence is GLDR.

This sequence belongs to the class-II aminoacyl-tRNA synthetase family. Type 1 subfamily. As to quaternary structure, homodimer.

It is found in the cytoplasm. It catalyses the reaction tRNA(Asp) + L-aspartate + ATP = L-aspartyl-tRNA(Asp) + AMP + diphosphate. Catalyzes the attachment of L-aspartate to tRNA(Asp) in a two-step reaction: L-aspartate is first activated by ATP to form Asp-AMP and then transferred to the acceptor end of tRNA(Asp). This is Aspartate--tRNA ligase from Fervidobacterium nodosum (strain ATCC 35602 / DSM 5306 / Rt17-B1).